Here is a 413-residue protein sequence, read N- to C-terminus: Gamma-glutamyl phosphate reductase (413 aa).

Belongs to the gamma-glutamyl phosphate reductase family.

The protein localises to the cytoplasm. The enzyme catalyses L-glutamate 5-semialdehyde + phosphate + NADP(+) = L-glutamyl 5-phosphate + NADPH + H(+). It functions in the pathway amino-acid biosynthesis; L-proline biosynthesis; L-glutamate 5-semialdehyde from L-glutamate: step 2/2. Functionally, catalyzes the NADPH-dependent reduction of L-glutamate 5-phosphate into L-glutamate 5-semialdehyde and phosphate. The product spontaneously undergoes cyclization to form 1-pyrroline-5-carboxylate. In Salinispora tropica (strain ATCC BAA-916 / DSM 44818 / JCM 13857 / NBRC 105044 / CNB-440), this protein is Gamma-glutamyl phosphate reductase.